The sequence spans 318 residues: Pyrimidine-specific ribonucleoside hydrolase RihA (318 aa).

Residue histidine 240 is part of the active site.

The protein belongs to the IUNH family. RihA subfamily.

Hydrolyzes cytidine or uridine to ribose and cytosine or uracil, respectively. The polypeptide is Pyrimidine-specific ribonucleoside hydrolase RihA (Shewanella sp. (strain MR-7)).